A 100-amino-acid polypeptide reads, in one-letter code: Urease subunit gamma (100 aa).

Belongs to the urease gamma subunit family. As to quaternary structure, heterotrimer of UreA (gamma), UreB (beta) and UreC (alpha) subunits. Three heterotrimers associate to form the active enzyme.

The protein localises to the cytoplasm. It carries out the reaction urea + 2 H2O + H(+) = hydrogencarbonate + 2 NH4(+). It functions in the pathway nitrogen metabolism; urea degradation; CO(2) and NH(3) from urea (urease route): step 1/1. The protein is Urease subunit gamma of Haemophilus influenzae (strain 86-028NP).